The following is a 141-amino-acid chain: Large ribosomal subunit protein uL11 (141 aa).

This sequence belongs to the universal ribosomal protein uL11 family. Part of the ribosomal stalk of the 50S ribosomal subunit. Interacts with L10 and the large rRNA to form the base of the stalk. L10 forms an elongated spine to which L12 dimers bind in a sequential fashion forming a multimeric L10(L12)X complex. Post-translationally, one or more lysine residues are methylated.

In terms of biological role, forms part of the ribosomal stalk which helps the ribosome interact with GTP-bound translation factors. This is Large ribosomal subunit protein uL11 from Streptococcus suis (strain 98HAH33).